We begin with the raw amino-acid sequence, 689 residues long: Dipeptidyl aminopeptidase BIII (689 aa).

The first 26 residues, 1–26 (MRHPAFRLTLLASTVAFALAPQAAQA), serve as a signal peptide directing secretion. Residues Ser506, Asp593, and His625 each act as charge relay system in the active site.

The protein belongs to the peptidase S9C family. As to quaternary structure, monomer.

Its activity is regulated as follows. Strongly inhibited by the serine protease inhibitor diisopropyl fluorophosphate (DFP), chymostatin, leupeptin, 0.5 mM ZnCl(2), 10 mM o-phenanthlorine and N-tosyl-L-phenyl-alanyl chloromethyl ketone (TPCK), but not by N-tosyl-L-lysyl chloromethyl ketone (TLCK). Activity is not affected significantly by iodoacetate (IAA), L-trans-epoxysuccinyl-leucylamido(4-guanido)butane (E64), pepstatin A and phenylmethanesulfonyl fluoride (PMSF). Activity is stimulated by addition of 0.5 mM CaCl(2), 10 mM EDTA and N-ethylmaleimide (NEM). Functionally, exopeptidase that catalyzes the removal of dipeptide units (NH2-P2-P1- or -P1'-P2'-COOH) from the free amino or carboxy termini. Prefers substrates composed of bulky, hydrophobic amino acids at P1 and P1' positions. Has endopeptidase activity on N-terminally blocked peptide derivatives which contain aromatic amino acid residue at the P1 position. Exopeptidase activity is much higher than its endopeptidase activity. The sequence is that of Dipeptidyl aminopeptidase BIII from Pseudoxanthomonas mexicana.